We begin with the raw amino-acid sequence, 553 residues long: Arginine--tRNA ligase (553 aa).

The 'HIGH' region signature appears at 130–140 (ANPTGDLHIGH).

Belongs to the class-I aminoacyl-tRNA synthetase family. Monomer.

It localises to the cytoplasm. It catalyses the reaction tRNA(Arg) + L-arginine + ATP = L-arginyl-tRNA(Arg) + AMP + diphosphate. This Staphylococcus aureus (strain MSSA476) protein is Arginine--tRNA ligase.